The primary structure comprises 323 residues: MDWQNRFSVLNLSSHDPLPELMLTHLTGWGAITLVGADKKAYLQGQVTCNVVSLQEQQVTFGAHCDAKGKVWSVFRLFHHHDGYAMFQPQSAMEVELRELKKYAIFSKVTIAESSDIALGVMGSQADAWIDTVSETTGDVRRIAGGTAVRMSPQRWLLLVNAEQAEQYVNAWQGLHVEQSLWTRMDIEEAVPVVTQTAQNEHIPQALNVQAVDGISFTKGCYTGQETVARAKYRGINKRAMYIVKGNLSAPLSQDEPVVLERAVGENWRSAGALLTHYRFTDSIAIGLIVLPNDLEHDVKLRLAAQPDTRWHIQPLPYSLSDE.

Folate-binding residues include Trp29 and Trp182.

Belongs to the tRNA-modifying YgfZ family.

The protein resides in the cytoplasm. Functionally, folate-binding protein involved in regulating the level of ATP-DnaA and in the modification of some tRNAs. It is probably a key factor in regulatory networks that act via tRNA modification, such as initiation of chromosomal replication. This Vibrio cholerae serotype O1 (strain M66-2) protein is tRNA-modifying protein YgfZ.